Here is a 263-residue protein sequence, read N- to C-terminus: Small ribosomal subunit protein uS2 (263 aa).

The interval 223–246 (KSLLEQDSDANADEAEVSQEEKDA) is disordered. Positions 228–240 (QDSDANADEAEVS) are enriched in acidic residues.

This sequence belongs to the universal ribosomal protein uS2 family.

The sequence is that of Small ribosomal subunit protein uS2 from Campylobacter curvus (strain 525.92).